Reading from the N-terminus, the 523-residue chain is Cytoplasmic dynein 1 light intermediate chain 1 (523 aa).

The interval 1-25 (MAAVGRVGSFGSSPPGLSSTYTGGP) is disordered. Over residues 9–19 (SFGSSPPGLSS) the composition is skewed to low complexity. 74 to 81 (GEDGAGKT) provides a ligand contact to ATP. S207 is modified (phosphoserine). At T213 the chain carries Phosphothreonine. Disordered stretches follow at residues 387–434 (PPTA…DPNM) and 456–523 (TGSP…GEAS). A phosphoserine mark is found at S398 and S405. T408 is modified (phosphothreonine). Phosphoserine is present on residues S412, S419, S421, and S427. Over residues 412–421 (SVSSNVASVS) the composition is skewed to low complexity. Residues 458–478 (SPGGPGVSGGSPAGGAGGGSS) show a composition bias toward gly residues. S487 carries the phosphoserine modification. Residues 493-503 (LDVHAELDRIT) are compositionally biased toward basic and acidic residues. Low complexity predominate over residues 506-523 (PVTVSPTTPTSPTEGEAS). S510 bears the Phosphoserine mark. Phosphothreonine occurs at positions 512, 513, and 515. Phosphoserine is present on S516.

The protein belongs to the dynein light intermediate chain family. In terms of assembly, homodimer. The cytoplasmic dynein 1 complex consists of two catalytic heavy chains (HCs) and a number of non-catalytic subunits presented by intermediate chains (ICs), light intermediate chains (LICs) and light chains (LCs); the composition seems to vary in respect to the IC, LIC and LC composition. The heavy chain homodimer serves as a scaffold for the probable homodimeric assembly of the respective non-catalytic subunits. The ICs and LICs bind directly to the HC dimer and the LCs assemble on the IC dimer. Self-associates. Interacts with DYNC1H1; DYNC1LI1 and DYNC1LI2 bind mutually exclusive to DYNC1H1. Interacts with PCNT. Forms a complex with RAB11FIP3 and RAB11A1; the interaction between DYNC1LI1 and RAB11FIP3 is direct and induces DYNC1LI1 localization onto endosomal membrane; the complex regulates endocytic trafficking. Interacts with RUFY3. As to quaternary structure, (Microbial infection) Interacts with human adenovirus 5 hexon protein; this interaction probably allows virus intracellular transport. In terms of processing, phosphorylated during mitosis but not in interphase.

Its subcellular location is the cytoplasm. The protein localises to the chromosome. The protein resides in the centromere. It localises to the kinetochore. It is found in the cytoskeleton. Its subcellular location is the spindle pole. The protein localises to the recycling endosome membrane. Functionally, acts as one of several non-catalytic accessory components of the cytoplasmic dynein 1 complex that are thought to be involved in linking dynein to cargos and to adapter proteins that regulate dynein function. Cytoplasmic dynein 1 acts as a motor for the intracellular retrograde motility of vesicles and organelles along microtubules. May play a role in binding dynein to membranous organelles or chromosomes. Probably involved in the microtubule-dependent transport of pericentrin. Is required for progress through the spindle assembly checkpoint. The phosphorylated form appears to be involved in the selective removal of MAD1L1 and MAD1L2 but not BUB1B from kinetochores. Forms a functional Rab11/RAB11FIP3/dynein complex onto endosomal membrane that regulates the movement of peripheral sorting endosomes (SE) along microtubule tracks toward the microtubule organizing center/centrosome, generating the endosomal recycling compartment (ERC). The sequence is that of Cytoplasmic dynein 1 light intermediate chain 1 (DYNC1LI1) from Homo sapiens (Human).